The sequence spans 166 residues: uncharacterized protein (166 aa).

Pentapeptide repeat domains lie at 38–77 (GECLDCNLAGADLREFNLENARLNRSDLSGANLSGVNLRR), 78–117 (ALLDRANLTGANLSETDLTEAALTEANLAGADLSGANLER), and 118–157 (SFLRDVDLTGANLKGANLAWANLTAANLTDVDLEEAEFWE).

This is an uncharacterized protein from Synechocystis sp. (strain ATCC 27184 / PCC 6803 / Kazusa).